A 322-amino-acid polypeptide reads, in one-letter code: ATP-dependent 6-phosphofructokinase (322 aa).

An ATP-binding site is contributed by Gly13. 23-27 (RAVVR) contributes to the ADP binding site. ATP-binding positions include 74–75 (RC) and 104–107 (GDGS). Asp105 provides a ligand contact to Mg(2+). 127–129 (TID) is a substrate binding site. Catalysis depends on Asp129, which acts as the Proton acceptor. Arg156 serves as a coordination point for ADP. Residues Arg164 and 171-173 (MGR) each bind substrate. Residues 187–189 (GAE) and 215–217 (KRH) each bind ADP. Substrate is bound by residues Glu224, Arg246, and 252 to 255 (HIQR).

Belongs to the phosphofructokinase type A (PFKA) family. ATP-dependent PFK group I subfamily. Prokaryotic clade 'B1' sub-subfamily. In terms of assembly, homotetramer. Mg(2+) is required as a cofactor.

It is found in the cytoplasm. The enzyme catalyses beta-D-fructose 6-phosphate + ATP = beta-D-fructose 1,6-bisphosphate + ADP + H(+). Its pathway is carbohydrate degradation; glycolysis; D-glyceraldehyde 3-phosphate and glycerone phosphate from D-glucose: step 3/4. Its activity is regulated as follows. Allosterically activated by ADP and other diphosphonucleosides, and allosterically inhibited by phosphoenolpyruvate. Its function is as follows. Catalyzes the phosphorylation of D-fructose 6-phosphate to fructose 1,6-bisphosphate by ATP, the first committing step of glycolysis. In Paenibacillus macquariensis (Bacillus macquariensis), this protein is ATP-dependent 6-phosphofructokinase.